The primary structure comprises 681 residues: MSTDNLFEDIEQDNNPSFYGNPSILNDPYRPIQPPPPQQQQQQHQENESKQSHTKSPKPPLQSIHSGTSNAHPQSQPQHKHKHKHNTSLNNGYPNELVNSTIGLSNRILELLNDSQLQVDIINSEKLVNSSVIVYTIELSSPTTKIVVKRRYSEFKSLRDNLLKLFPTLIIPPIPEKHSILSYLLNTINHSHEISIIEMRKRYFKMFLDDLIFQSDYKLKNCPLLHKFFDPNYELCWYNALNEPPVSLIPDNLLLANPINPADQNGLYSLLPIVNGFDFNSHIDNLSNLKKINEDLYKLNDQVKLYELKGFEQDLEFSIPEELIQFEIKFHQTIKILTDLNKLNSKTTKNYKSMVDTLIDLGGNLNNFSLQVYQQKSGSNNELSEAIEKFGSTMDQSFLNFESFILNQLVPQWQEPVDQLILYLQNSLGLIKFYKYKIVQFKILYKLKFNKFQQLINLTNIGGVSSSGSGGGGLLASRISTDNDSNNSNNSGNNNNDGDLDTENFDHLKELNSPTINNALKNLSTKKISKKSSWYGLFGGNNQTKKFNFQLPIEEPTTATGSTEQQSQQQSAPNSPQREQQQQQSQSQSHHSHQTSIRFKLNHIEKELNKLNQLIELCNQDMHKLTEALVNTFEEFLSKIERKWLQLMITYIQNCKNMFEANLTNWKEFKESLVNETREVN.

Acidic residues predominate over residues 1–12 (MSTDNLFEDIEQ). Positions 1–94 (MSTDNLFEDI…HNTSLNNGYP (94 aa)) are disordered. A compositionally biased stretch (polar residues) spans 13-24 (DNNPSFYGNPSI). The PX domain maps to 113-236 (NDSQLQVDII…KFFDPNYELC (124 aa)). A 1,2-diacyl-sn-glycero-3-phospho-(1D-myo-inositol-3-phosphate) is bound by residues Arg151, Ser153, Lys177, and Arg200. Disordered stretches follow at residues 475–505 (LASR…TENF) and 558–597 (TATG…QTSI). Low complexity-rich tracts occupy residues 482–497 (DNDS…NNND) and 558–589 (TATG…QSQS).

This sequence belongs to the sorting nexin family.

The protein resides in the endosome membrane. It localises to the endomembrane system. Its function is as follows. May be required for cytoplasm to vacuole transport (Cvt) and pexophagy. This chain is Sorting nexin-41 (SNX41), found in Candida albicans (strain SC5314 / ATCC MYA-2876) (Yeast).